Consider the following 949-residue polypeptide: Lon protease homolog, mitochondrial (949 aa).

A mitochondrion-targeting transit peptide spans 1 to 65 (MAASTGYVRL…VLPGGVQWRG (65 aa)). Disordered stretches follow at residues 68–94 (DSGNRGGSDETSEGGAEDGATASTGEG) and 213–240 (EGLEPEAEKQKSRRKLKRGKKEVEDELG). Residues 112 to 359 (LPLIAITRNP…KALSLLKKEF (248 aa)) enclose the Lon N-terminal domain. The segment covering 223 to 232 (KSRRKLKRGK) has biased composition (basic residues). 512 to 519 (GPPGVGKT) is a binding site for ATP. One can recognise a Lon proteolytic domain in the interval 748-938 (VTPPGVVMGL…RDIFPIAFPR (191 aa)). Active-site residues include serine 844 and lysine 887.

The protein belongs to the peptidase S16 family. In terms of assembly, homohexamer. Organized in a ring with a central cavity. The ATP-binding and proteolytic domains (AP-domain) form a hexameric chamber, while the N-terminal domain is arranged as a trimer of dimers. DNA and RNA binding is stimulated by substrate and inhibited by ATP binding. Interacts with TWNK and mitochondrial DNA polymerase subunit POLG. In terms of tissue distribution, detected in liver &gt; heart &gt; kidney &gt; testis.

Its subcellular location is the mitochondrion matrix. The enzyme catalyses Hydrolysis of proteins in presence of ATP.. Its function is as follows. ATP-dependent serine protease that mediates the selective degradation of misfolded, unassembled or oxidatively damaged polypeptides as well as certain short-lived regulatory proteins in the mitochondrial matrix. Endogenous substrates include mitochondrial steroidogenic acute regulatory (StAR) protein, DELE1, helicase Twinkle (TWNK) and the large ribosomal subunit protein MRPL32/bL32m. MRPL32/bL32m is protected from degradation by LONP1 when it is bound to a nucleic acid (RNA), but TWNK is not. May also have a chaperone function in the assembly of inner membrane protein complexes. Participates in the regulation of mitochondrial gene expression and in the maintenance of the integrity of the mitochondrial genome. Binds to mitochondrial promoters and RNA in a single-stranded, site-specific, and strand-specific manner. May regulate mitochondrial DNA replication and/or gene expression using site-specific, single-stranded DNA binding to target the degradation of regulatory proteins binding to adjacent sites in mitochondrial promoters. This Mus musculus (Mouse) protein is Lon protease homolog, mitochondrial (Lonp1).